A 183-amino-acid chain; its full sequence is Macro domain-containing protein (183 aa).

The Macro domain occupies 1-174 (MKKVHLIQAD…IYKNILSNID (174 aa)).

The protein belongs to the MacroD-type family.

This is Macro domain-containing protein from Acinetobacter sp. (strain ED45-25).